We begin with the raw amino-acid sequence, 168 residues long: Phosphopantetheine adenylyltransferase (168 aa).

A substrate-binding site is contributed by T10. ATP is bound by residues 10-11 (TF) and H18. Substrate is bound by residues K42, L74, and R88. Residues 89–91 (GLR), E99, and 124–130 (NSFISST) contribute to the ATP site.

The protein belongs to the bacterial CoaD family. As to quaternary structure, homohexamer. Mg(2+) is required as a cofactor.

It is found in the cytoplasm. The enzyme catalyses (R)-4'-phosphopantetheine + ATP + H(+) = 3'-dephospho-CoA + diphosphate. It functions in the pathway cofactor biosynthesis; coenzyme A biosynthesis; CoA from (R)-pantothenate: step 4/5. Functionally, reversibly transfers an adenylyl group from ATP to 4'-phosphopantetheine, yielding dephospho-CoA (dPCoA) and pyrophosphate. The sequence is that of Phosphopantetheine adenylyltransferase from Shewanella frigidimarina (strain NCIMB 400).